A 526-amino-acid polypeptide reads, in one-letter code: Peptide chain release factor 3 (526 aa).

The tr-type G domain maps to 8–277 (NKRRTFAIIS…GLTEWAPKPQ (270 aa)). GTP is bound by residues 17 to 24 (SHPDAGKT), 85 to 89 (DTPGH), and 139 to 142 (NKLD).

The protein belongs to the TRAFAC class translation factor GTPase superfamily. Classic translation factor GTPase family. PrfC subfamily.

The protein resides in the cytoplasm. Increases the formation of ribosomal termination complexes and stimulates activities of RF-1 and RF-2. It binds guanine nucleotides and has strong preference for UGA stop codons. It may interact directly with the ribosome. The stimulation of RF-1 and RF-2 is significantly reduced by GTP and GDP, but not by GMP. The protein is Peptide chain release factor 3 of Actinobacillus pleuropneumoniae serotype 3 (strain JL03).